We begin with the raw amino-acid sequence, 467 residues long: ATP synthase subunit beta (467 aa).

Residue 150–157 (GGAGVGKT) coordinates ATP.

Belongs to the ATPase alpha/beta chains family. In terms of assembly, F-type ATPases have 2 components, CF(1) - the catalytic core - and CF(0) - the membrane proton channel. CF(1) has five subunits: alpha(3), beta(3), gamma(1), delta(1), epsilon(1). CF(0) has three main subunits: a(1), b(2) and c(9-12). The alpha and beta chains form an alternating ring which encloses part of the gamma chain. CF(1) is attached to CF(0) by a central stalk formed by the gamma and epsilon chains, while a peripheral stalk is formed by the delta and b chains.

It is found in the cell inner membrane. The enzyme catalyses ATP + H2O + 4 H(+)(in) = ADP + phosphate + 5 H(+)(out). Its function is as follows. Produces ATP from ADP in the presence of a proton gradient across the membrane. The catalytic sites are hosted primarily by the beta subunits. This chain is ATP synthase subunit beta, found in Vibrio cholerae serotype O1 (strain ATCC 39541 / Classical Ogawa 395 / O395).